Here is a 113-residue protein sequence, read N- to C-terminus: Endoribonuclease SymE (113 aa).

The SpoVT-AbrB domain occupies 29–74 (GRYPDYSRIPAITLKGQWLEVAGFATGTAVDVKVMEGCIVLTAQPP).

It belongs to the SymE family.

It localises to the cytoplasm. In terms of biological role, involved in the degradation and recycling of damaged RNA. It is itself a target for degradation by the ATP-dependent protease Lon. This is Endoribonuclease SymE from Escherichia coli O7:K1 (strain IAI39 / ExPEC).